We begin with the raw amino-acid sequence, 160 residues long: MAPK regulated corepressor interacting protein 2 (160 aa).

Methionine 1 bears the N-acetylmethionine mark. Residues 1–64 form a disordered region; that stretch reads MYTITKGPSK…GPWPLSSPGP (64 aa). Arginine 35 carries the omega-N-methylarginine modification. Pro residues predominate over residues 37–61; that stretch reads PAPPTSQPPRAQPFAQPPGPWPLSS. Residue serine 61 is modified to Phosphoserine. Arginine 65 carries the omega-N-methylarginine modification. Serine 82 carries the phosphoserine modification.

This sequence belongs to the MCRIP family. Interacts with DDX6. Interacts with MCRIP1.

It localises to the cytoplasm. Its subcellular location is the stress granule. The protein localises to the nucleus. The protein is MAPK regulated corepressor interacting protein 2 (MCRIP2) of Homo sapiens (Human).